Reading from the N-terminus, the 1067-residue chain is Dorsal-ventral patterning protein tolloid (1067 aa).

The first 36 residues, 1–36 (MKGMRLMPMKMKAKLVVLSVGALWMMMFFLVDYAEG), serve as a signal peptide directing secretion. A propeptide spanning residues 37-136 (RRLSQLPESE…NGQPIQRRRR (100 aa)) is cleaved from the precursor. The Peptidase M12A domain occupies 136-338 (RAVTVRKERT…VQANLLYKCA (203 aa)). N-linked (GlcNAc...) asparagine glycosylation is present at Asn-176. 5 disulfide bridges follow: Cys-179–Cys-337, Cys-201–Cys-223, Cys-203–Cys-204, Cys-340–Cys-390, and Cys-417–Cys-439. Residue His-231 coordinates Zn(2+). Glu-232 is an active-site residue. The Zn(2+) site is built by His-235 and His-241. 2 consecutive short sequence motifs (cell attachment site) follow at residues 245 to 247 (RGD) and 325 to 327 (RGD). CUB domains lie at 340–477 (CGRT…FEVV) and 478–591 (CGGD…LMLD). Asn-441 carries an N-linked (GlcNAc...) asparagine glycan. 6 cysteine pairs are disulfide-bonded: Cys-478–Cys-505, Cys-532–Cys-554, Cys-595–Cys-606, Cys-602–Cys-615, Cys-617–Cys-630, and Cys-634–Cys-662. Residue Asn-543 is glycosylated (N-linked (GlcNAc...) asparagine). One can recognise an EGF-like 1; calcium-binding domain in the interval 591–631 (DVDECKFTDHGCQHLCINTLGSYQCGCRAGYELQANGKTCE). Residues 634–753 (CGGVVDATKS…SGFVAKFVID (120 aa)) enclose the CUB 3 domain. N-linked (GlcNAc...) asparagine glycans are attached at residues Asn-644 and Asn-677. 8 disulfide bridges follow: Cys-693–Cys-716, Cys-757–Cys-768, Cys-764–Cys-777, Cys-779–Cys-792, Cys-797–Cys-823, Cys-850–Cys-872, Cys-910–Cys-940, and Cys-967–Cys-989. Residues 753–793 (DVDECSMNNGGCQHRCRNTFGSYQCSCRNGYTLAENGHNCT) enclose the EGF-like 2; calcium-binding domain. Asn-791 carries N-linked (GlcNAc...) asparagine glycosylation. CUB domains are found at residues 797–909 (CKFE…FVSE) and 910–1026 (CGGY…FMAV). Residues Asn-864 and Asn-918 are each glycosylated (N-linked (GlcNAc...) asparagine).

Requires Zn(2+) as cofactor.

In terms of biological role, metalloprotease which cleaves TGF-beta family ligands daw, Actbeta and myo in vitro. Cleavage of daw enhances its signaling activity. Cleaves dorsal-ventral patterning protein sog. Processes sog more efficiently than metalloprotease tld which also cleaves sog. Required for normal dorsal development. TLD may interact physically with DPP-C protein. The chain is Dorsal-ventral patterning protein tolloid (tld) from Drosophila melanogaster (Fruit fly).